A 314-amino-acid chain; its full sequence is Ribosomal RNA small subunit methyltransferase A (314 aa).

Residues asparagine 29, valine 31, glycine 56, glutamate 77, aspartate 107, and asparagine 126 each coordinate S-adenosyl-L-methionine. The segment at 291 to 314 (PKADDAGDDADAQAKADGAQVSTL) is disordered. Positions 303–314 (QAKADGAQVSTL) are enriched in low complexity.

Belongs to the class I-like SAM-binding methyltransferase superfamily. rRNA adenine N(6)-methyltransferase family. RsmA subfamily.

Its subcellular location is the cytoplasm. It carries out the reaction adenosine(1518)/adenosine(1519) in 16S rRNA + 4 S-adenosyl-L-methionine = N(6)-dimethyladenosine(1518)/N(6)-dimethyladenosine(1519) in 16S rRNA + 4 S-adenosyl-L-homocysteine + 4 H(+). Functionally, specifically dimethylates two adjacent adenosines (A1518 and A1519) in the loop of a conserved hairpin near the 3'-end of 16S rRNA in the 30S particle. May play a critical role in biogenesis of 30S subunits. In Mycolicibacterium gilvum (strain PYR-GCK) (Mycobacterium gilvum (strain PYR-GCK)), this protein is Ribosomal RNA small subunit methyltransferase A.